A 517-amino-acid polypeptide reads, in one-letter code: Ribonuclease Y (517 aa).

Residues 1 to 21 (MIESLIALIAAIVGLGIGYLV) traverse the membrane as a helical segment. The KH domain occupies 207–273 (LINVINIKND…TKVIELLVED (67 aa)). Residues 333–426 (ALAHSLEVAH…VCAADTLSAA (94 aa)) form the HD domain.

This sequence belongs to the RNase Y family.

Its subcellular location is the cell membrane. Functionally, endoribonuclease that initiates mRNA decay. The sequence is that of Ribonuclease Y from Campylobacter jejuni subsp. jejuni serotype O:6 (strain 81116 / NCTC 11828).